A 113-amino-acid polypeptide reads, in one-letter code: Small ribosomal subunit protein uS17 (113 aa).

It belongs to the universal ribosomal protein uS17 family. In terms of assembly, part of the 30S ribosomal subunit.

Its function is as follows. One of the primary rRNA binding proteins, it binds specifically to the 5'-end of 16S ribosomal RNA. This Nanoarchaeum equitans (strain Kin4-M) protein is Small ribosomal subunit protein uS17.